The following is a 396-amino-acid chain: MTEHNVRNFNINFGPQHPAAHGVLRLVLELDGEIVERVDPHIGLLHRGTEKLIEAKTYLQAIPYFDRLDYVAPMNQEHAFALAVERLTGTQVPIRGQLIRVLYSEIGRILSHLLNVTTQAMDVGALTPPLWGFEEREKLMVFYERACGARMHAAYFRPGGVHQDLPHQLVEDIGKWIDPFLKTVDDIDELLTGNRIFKQRNVDIGVVSLEDAWAWGFSGVMVRGSGAAWDLRRSQPYECYSDLEFDIPIGKNGDCFDRYLIRMIEMRESARIMRQCVDRLLGDAKVGPVSSLDGKIVPPKRGEMKRSMEALIHHFKLYTEGYHVPAGDVYAAVEAPKGEFGVYLVSDGTNKPYRCKIRAPGYAHLQAMDFLCRGHQLADVSAVLGSLDIVFGEVDR.

Belongs to the complex I 49 kDa subunit family. As to quaternary structure, NDH-1 is composed of 14 different subunits. Subunits NuoB, C, D, E, F, and G constitute the peripheral sector of the complex.

Its subcellular location is the cell inner membrane. It catalyses the reaction a quinone + NADH + 5 H(+)(in) = a quinol + NAD(+) + 4 H(+)(out). Functionally, NDH-1 shuttles electrons from NADH, via FMN and iron-sulfur (Fe-S) centers, to quinones in the respiratory chain. The immediate electron acceptor for the enzyme in this species is believed to be ubiquinone. Couples the redox reaction to proton translocation (for every two electrons transferred, four hydrogen ions are translocated across the cytoplasmic membrane), and thus conserves the redox energy in a proton gradient. This is NADH-quinone oxidoreductase subunit D 1 from Sinorhizobium medicae (strain WSM419) (Ensifer medicae).